The following is a 474-amino-acid chain: Probable phenylalanine--tRNA ligase alpha subunit (474 aa).

The segment at 1-150 (MSLSQKILEL…KRKLIYQAKE (150 aa)) is contains the major tRNA-Phe binding sites. L-phenylalanine contacts are provided by residues Thr308, 350-352 (QVE), and Tyr390. Glu392 lines the Mg(2+) pocket. Phe416 contributes to the L-phenylalanine binding site.

This sequence belongs to the class-II aminoacyl-tRNA synthetase family. Phe-tRNA synthetase alpha subunit type 2 subfamily. In terms of assembly, tetramer of two alpha and two beta subunits. Mg(2+) serves as cofactor.

Its subcellular location is the cytoplasm. It carries out the reaction tRNA(Phe) + L-phenylalanine + ATP = L-phenylalanyl-tRNA(Phe) + AMP + diphosphate + H(+). The polypeptide is Probable phenylalanine--tRNA ligase alpha subunit (Vairimorpha ceranae (strain BRL01) (Microsporidian parasite)).